A 340-amino-acid chain; its full sequence is Ketol-acid reductoisomerase (NADP(+)) (340 aa).

The KARI N-terminal Rossmann domain maps to 2–181 (AKVFYNGDIN…GSARAGVIET (180 aa)). NADP(+)-binding positions include 25 to 28 (YGSQ), Arg-48, Ser-52, and 82 to 85 (DEHQ). His-107 is a catalytic residue. Gly-133 is a binding site for NADP(+). Residues 182–327 (TFQEETETDL…RELREMMPFV (146 aa)) form the KARI C-terminal knotted domain. Residues Asp-190, Glu-194, Glu-226, and Glu-230 each contribute to the Mg(2+) site. Ser-251 is a binding site for substrate.

It belongs to the ketol-acid reductoisomerase family. It depends on Mg(2+) as a cofactor.

The enzyme catalyses (2R)-2,3-dihydroxy-3-methylbutanoate + NADP(+) = (2S)-2-acetolactate + NADPH + H(+). The catalysed reaction is (2R,3R)-2,3-dihydroxy-3-methylpentanoate + NADP(+) = (S)-2-ethyl-2-hydroxy-3-oxobutanoate + NADPH + H(+). The protein operates within amino-acid biosynthesis; L-isoleucine biosynthesis; L-isoleucine from 2-oxobutanoate: step 2/4. It participates in amino-acid biosynthesis; L-valine biosynthesis; L-valine from pyruvate: step 2/4. Functionally, involved in the biosynthesis of branched-chain amino acids (BCAA). Catalyzes an alkyl-migration followed by a ketol-acid reduction of (S)-2-acetolactate (S2AL) to yield (R)-2,3-dihydroxy-isovalerate. In the isomerase reaction, S2AL is rearranged via a Mg-dependent methyl migration to produce 3-hydroxy-3-methyl-2-ketobutyrate (HMKB). In the reductase reaction, this 2-ketoacid undergoes a metal-dependent reduction by NADPH to yield (R)-2,3-dihydroxy-isovalerate. This is Ketol-acid reductoisomerase (NADP(+)) from Halalkalibacterium halodurans (strain ATCC BAA-125 / DSM 18197 / FERM 7344 / JCM 9153 / C-125) (Bacillus halodurans).